Reading from the N-terminus, the 468-residue chain is Acetyl-CoA decarbonylase/synthase complex subunit gamma (468 aa).

Residues 1–60 (MKINSPLEAYKYLPQTNCGECGEATCMAFASKLIDRSGKTSDCPPLIKEKKFAKKLAELD) form the 4Fe-4S domain. Residues Cys18, Cys21, Cys26, and Cys43 each contribute to the [4Fe-4S] cluster site.

In terms of assembly, heterodimer of delta and gamma chains. The ACDS complex is made up of alpha, epsilon, beta, gamma and delta chains with a probable stoichiometry of (alpha(2)epsilon(2))(4)-beta(8)-(gamma(1)delta(1))(8). It depends on corrinoid as a cofactor. The cofactor is [4Fe-4S] cluster.

The catalysed reaction is 5,6,7,8-tetrahydrosarcinapterin + methyl-Co(III)-[corrinoid Fe-S protein] = 5-methyltetrahydrosarcinapterin + Co(I)-[corrinoid Fe-S protein] + H(+). Its pathway is one-carbon metabolism; methanogenesis from acetate. Part of a complex that catalyzes the reversible cleavage of acetyl-CoA, allowing growth on acetate as sole source of carbon and energy. This is Acetyl-CoA decarbonylase/synthase complex subunit gamma from Methanosarcina acetivorans (strain ATCC 35395 / DSM 2834 / JCM 12185 / C2A).